A 328-amino-acid polypeptide reads, in one-letter code: Serine protease 27 (328 aa).

The N-terminal stretch at 1–22 is a signal peptide; sequence MRQPHIAALLLLPLLLRSGTEG. The propeptide at 23–37 is activation peptide; sequence ARTLRACGHPKMFNR. A Peptidase S1 domain is found at 38 to 280; it reads MVGGENALEG…HHKWIHQIIP (243 aa). An intrachain disulfide couples Cys63 to Cys79. The active-site Charge relay system is the His78. The N-linked (GlcNAc...) asparagine glycan is linked to Asn82. Asp127 acts as the Charge relay system in catalysis. Intrachain disulfides connect Cys161–Cys238, Cys194–Cys217, and Cys228–Cys256. The active-site Charge relay system is the Ser232.

Belongs to the peptidase S1 family.

Its subcellular location is the secreted. This is Serine protease 27 (Prss27) from Mus musculus (Mouse).